The chain runs to 382 residues: Lipid-A-disaccharide synthase (382 aa).

Belongs to the LpxB family.

The enzyme catalyses 2-N,3-O-bis[(3R)-3-hydroxytetradecanoyl]-alpha-D-glucosaminyl 1-phosphate + UDP-2-N,3-O-bis[(3R)-3-hydroxytetradecanoyl]-alpha-D-glucosamine = lipid A disaccharide (E. coli) + UDP + H(+). It catalyses the reaction a lipid X + a UDP-2-N,3-O-bis[(3R)-3-hydroxyacyl]-alpha-D-glucosamine = a lipid A disaccharide + UDP + H(+). It functions in the pathway glycolipid biosynthesis; lipid IV(A) biosynthesis; lipid IV(A) from (3R)-3-hydroxytetradecanoyl-[acyl-carrier-protein] and UDP-N-acetyl-alpha-D-glucosamine: step 5/6. Condensation of UDP-2,3-diacylglucosamine and 2,3-diacylglucosamine-1-phosphate to form lipid A disaccharide, a precursor of lipid A, a phosphorylated glycolipid that anchors the lipopolysaccharide to the outer membrane of the cell. The chain is Lipid-A-disaccharide synthase from Escherichia coli O7:K1 (strain IAI39 / ExPEC).